The primary structure comprises 461 residues: Phosphomethylpyrimidine synthase (461 aa).

Substrate is bound by residues Asn80, Met109, Tyr138, His173, 193–195, 234–237, and Glu273; these read SRG and DGLR. His277 lines the Zn(2+) pocket. Substrate is bound at residue Tyr300. Residue His341 coordinates Zn(2+). The [4Fe-4S] cluster site is built by Cys421, Cys424, and Cys429.

Belongs to the ThiC family. The cofactor is [4Fe-4S] cluster.

It catalyses the reaction 5-amino-1-(5-phospho-beta-D-ribosyl)imidazole + S-adenosyl-L-methionine = 4-amino-2-methyl-5-(phosphooxymethyl)pyrimidine + CO + 5'-deoxyadenosine + formate + L-methionine + 3 H(+). The protein operates within cofactor biosynthesis; thiamine diphosphate biosynthesis. Its function is as follows. Catalyzes the synthesis of the hydroxymethylpyrimidine phosphate (HMP-P) moiety of thiamine from aminoimidazole ribotide (AIR) in a radical S-adenosyl-L-methionine (SAM)-dependent reaction. In Solibacter usitatus (strain Ellin6076), this protein is Phosphomethylpyrimidine synthase.